Consider the following 671-residue polypeptide: DNA ligase (671 aa).

Residues 32–36 (DAEYD), 81–82 (SL), and Glu-113 each bind NAD(+). Lys-115 (N6-AMP-lysine intermediate) is an active-site residue. NAD(+)-binding residues include Arg-136, Glu-173, Lys-290, and Lys-314. Zn(2+)-binding residues include Cys-408, Cys-411, Cys-426, and Cys-432. In terms of domain architecture, BRCT spans 593–671 (EIDSPFAGKT…ETEMLHLLGS (79 aa)).

The protein belongs to the NAD-dependent DNA ligase family. LigA subfamily. The cofactor is Mg(2+). Mn(2+) is required as a cofactor.

The catalysed reaction is NAD(+) + (deoxyribonucleotide)n-3'-hydroxyl + 5'-phospho-(deoxyribonucleotide)m = (deoxyribonucleotide)n+m + AMP + beta-nicotinamide D-nucleotide.. DNA ligase that catalyzes the formation of phosphodiester linkages between 5'-phosphoryl and 3'-hydroxyl groups in double-stranded DNA using NAD as a coenzyme and as the energy source for the reaction. It is essential for DNA replication and repair of damaged DNA. The polypeptide is DNA ligase (Escherichia coli O6:K15:H31 (strain 536 / UPEC)).